Here is a 114-residue protein sequence, read N- to C-terminus: Ferredoxin (114 aa).

The [3Fe-4S] cluster site is built by Cys-9 and Cys-17. Positions 21, 40, 43, and 46 each coordinate [4Fe-4S] cluster. In terms of domain architecture, 4Fe-4S ferredoxin-type spans Arg-31 to Asp-60. Cys-50 lines the [3Fe-4S] cluster pocket.

Requires [4Fe-4S] cluster as cofactor. [3Fe-4S] cluster serves as cofactor.

Its function is as follows. Ferredoxins are iron-sulfur proteins that transfer electrons in a wide variety of metabolic reactions. This chain is Ferredoxin (fdxA), found in Mycobacterium tuberculosis (strain ATCC 25618 / H37Rv).